Here is a 634-residue protein sequence, read N- to C-terminus: Nicotinic receptor-associated protein 1 (634 aa).

C2 domains lie at M1–L141 and K159–L295. Residues L29, D30, D36, D105, D107, D119, D189, D195, D251, D253, and D271 each contribute to the Ca(2+) site. In terms of domain architecture, VWFA spans D338 to L557. The disordered stretch occupies residues R576–T603. The span at P582 to P592 shows a compositional bias: basic and acidic residues.

The protein belongs to the copine family. As to quaternary structure, interacts with nicotinic acetylcholine receptor. Ca(2+) serves as cofactor. In terms of tissue distribution, expressed in head and tail neurons, ventral cord moto-neurons, body wall muscles and hypodermal cells of the vulva.

The protein localises to the cell membrane. Its function is as follows. Exhibits calcium-dependent phospholipid binding properties. May function in membrane trafficking. Regulates synaptic levels of nicotinic acetylcholine receptor subunit lev-1 and unc-38 in the nerve cord. Involved in nicotinic acetylcholine receptor (nAChR)-mediated sensitivity to nicotine and levamisole. Affects directional sperm motility. The chain is Nicotinic receptor-associated protein 1 (nra-1) from Caenorhabditis elegans.